Here is a 635-residue protein sequence, read N- to C-terminus: Threonine--tRNA ligase (635 aa).

The TGS domain maps to M1–T61. The interval D242–P532 is catalytic. Zn(2+)-binding residues include C333, H384, and H509.

The protein belongs to the class-II aminoacyl-tRNA synthetase family. Homodimer. Requires Zn(2+) as cofactor.

The protein localises to the cytoplasm. The catalysed reaction is tRNA(Thr) + L-threonine + ATP = L-threonyl-tRNA(Thr) + AMP + diphosphate + H(+). Catalyzes the attachment of threonine to tRNA(Thr) in a two-step reaction: L-threonine is first activated by ATP to form Thr-AMP and then transferred to the acceptor end of tRNA(Thr). Also edits incorrectly charged L-seryl-tRNA(Thr). In Clostridium botulinum (strain ATCC 19397 / Type A), this protein is Threonine--tRNA ligase.